The sequence spans 260 residues: MLPVAGSDVTVWSPQGRIHQIEYAMEAVKQGSATVGLKSKTHAVLVALKRAQSELAAHQKKILYVDNHIGISIAGLTADARLLCNFMRQECLDSRFVFDRPLPVSRLVSLIGSKTQIPTQRYGRRPYGVGLLIAGYDDMGPHIFQTCPSANYFDCKAMSIGARSQSARNYLERHMTEFTDCNLNELVKHGLRALRETLPAEQDLTTKNVSIGIVGKDMEFTIYDDDDVAPFLEGLEERPQRKPALPADEPAEKAEEPMEH.

The disordered stretch occupies residues 231–260 (FLEGLEERPQRKPALPADEPAEKAEEPMEH). A compositionally biased stretch (basic and acidic residues) spans 250-260 (PAEKAEEPMEH).

The protein belongs to the peptidase T1A family. In terms of assembly, the 26S proteasome consists of a 20S proteasome core and two 19S regulatory subunits. The 20S proteasome core is a barrel-shaped complex made of 28 subunits that are arranged in four stacked rings. The two outer rings are each formed by seven alpha subunits, and the two inner rings are formed by seven beta subunits. The proteolytic activity is exerted by three beta-subunits PSMB5, PSMB6 and PSMB7.

The protein resides in the cytoplasm. It is found in the nucleus. In terms of biological role, component of the 20S core proteasome complex involved in the proteolytic degradation of most intracellular proteins. This complex plays numerous essential roles within the cell by associating with different regulatory particles. Associated with two 19S regulatory particles, forms the 26S proteasome and thus participates in the ATP-dependent degradation of ubiquitinated proteins. The 26S proteasome plays a key role in the maintenance of protein homeostasis by removing misfolded or damaged proteins that could impair cellular functions, and by removing proteins whose functions are no longer required. Associated with the PA200 or PA28, the 20S proteasome mediates ubiquitin-independent protein degradation. This type of proteolysis is required in several pathways including spermatogenesis (20S-PA200 complex) or generation of a subset of MHC class I-presented antigenic peptides (20S-PA28 complex). This is Proteasome subunit alpha type-1 (PSMA1) from Gallus gallus (Chicken).